We begin with the raw amino-acid sequence, 325 residues long: Probable cell division protein WhiA (325 aa).

The H-T-H motif DNA-binding region spans 273 to 306 (SLEELGRLADPPMTKDAVAGRIRRLLSMADRKAK).

The protein belongs to the WhiA family.

In terms of biological role, involved in cell division and chromosome segregation. The sequence is that of Probable cell division protein WhiA from Mycobacterium bovis (strain BCG / Tokyo 172 / ATCC 35737 / TMC 1019).